We begin with the raw amino-acid sequence, 332 residues long: Putative threonine dehydratase (332 aa).

N6-(pyridoxal phosphate)lysine is present on Lys56.

Belongs to the serine/threonine dehydratase family. The cofactor is pyridoxal 5'-phosphate.

The enzyme catalyses L-threonine = 2-oxobutanoate + NH4(+). The protein operates within amino-acid biosynthesis; L-isoleucine biosynthesis; 2-oxobutanoate from L-threonine: step 1/1. This Sinorhizobium fredii (strain NBRC 101917 / NGR234) protein is Putative threonine dehydratase.